The chain runs to 620 residues: Zinc metalloproteinase-disintegrin-like ACLD (620 aa).

The N-terminal stretch at 1–20 is a signal peptide; it reads MIQVLLVTLCLAVFPYQGSS. The propeptide occupies 21-189; the sequence is IILESGNVND…KKASQLNLTP (169 aa). Positions 199-395 constitute a Peptidase M12B domain; it reads KYVEFVVVLD…RRPKCILNEP (197 aa). Glutamate 202 lines the Ca(2+) pocket. 2 N-linked (GlcNAc...) asparagine glycosylation sites follow: asparagine 259 and asparagine 265. Aspartate 286 contacts Ca(2+). Disulfide bonds link cysteine 310/cysteine 390, cysteine 350/cysteine 374, and cysteine 352/cysteine 357. Histidine 335 lines the Zn(2+) pocket. Residue glutamate 336 is part of the active site. Zn(2+) contacts are provided by histidine 339 and histidine 345. Asparagine 373 carries N-linked (GlcNAc...) asparagine glycosylation. Residues cysteine 390 and asparagine 393 each coordinate Ca(2+). Asparagine 396 carries N-linked (GlcNAc...) asparagine glycosylation. The Disintegrin domain occupies 403 to 489; the sequence is PPVCGNELLE…ECPTDRFQRN (87 aa). Residues valine 405, asparagine 408, leucine 410, glutamate 412, glutamate 415, and aspartate 418 each coordinate Ca(2+). Disulfide bonds link cysteine 406–cysteine 435, cysteine 417–cysteine 430, cysteine 419–cysteine 425, cysteine 429–cysteine 452, cysteine 443–cysteine 449, cysteine 448–cysteine 474, cysteine 461–cysteine 481, cysteine 468–cysteine 500, cysteine 493–cysteine 505, cysteine 512–cysteine 562, cysteine 527–cysteine 573, cysteine 540–cysteine 550, cysteine 557–cysteine 599, and cysteine 593–cysteine 604. A D/ECD-tripeptide motif is present at residues 467 to 469; sequence DCD. Asparagine 502 and asparagine 536 each carry an N-linked (GlcNAc...) asparagine glycan.

It belongs to the venom metalloproteinase (M12B) family. P-III subfamily. P-IIIa sub-subfamily. In terms of assembly, monomer. Zn(2+) is required as a cofactor. As to expression, expressed by the venom gland.

It is found in the secreted. Its activity is regulated as follows. Inhibited by EDTA and O-phenanthroline. Not inhibited by PMSF, benzamidine, irreversible serine-proteinase inhibitors and cysteine proteinase inhibitor E-64. In terms of biological role, is a potent activator of prothrombin (F2). Does not elicit any hemorrhagic response. Barely inhibits collagen-induced platelet aggregation. Binds neither collagen, nor the jararhagin-monoclonal antibody MAJar3. Hydrolyzes the Aalpha-chain of fibrin and fibrinogen, without affecting the Bbeta- and gamma-chains. Is capable of triggering endothelial pro-inflammatory and procoagulant cell responses, but fails to trigger apoptosis. Induces von Willebrand factor release, and the expression of both ICAM1 and E-selectin (SELE) (without increase in VCAM1) in endothelial cells (HUVEC). Is also able to up-regulate the synthesis of the coagulation factor TF (F3). Enhances nitric oxide (NO) generation, prostacyclin production and interleukin-8 release. The chain is Zinc metalloproteinase-disintegrin-like ACLD from Agkistrodon contortrix laticinctus (Broad-banded copperhead).